Reading from the N-terminus, the 287-residue chain is Iron-sulfur cluster carrier protein (287 aa).

47-54 (GKGGVGKS) provides a ligand contact to ATP.

This sequence belongs to the Mrp/NBP35 ATP-binding proteins family. In terms of assembly, homodimer.

Functionally, binds and transfers iron-sulfur (Fe-S) clusters to target apoproteins. Can hydrolyze ATP. The protein is Iron-sulfur cluster carrier protein of Pseudomonas fragi.